The sequence spans 426 residues: Serine--tRNA ligase (426 aa).

Threonine 229 to glutamate 231 contributes to the L-serine binding site. ATP contacts are provided by residues arginine 260–glutamate 262 and valine 276. Residue glutamate 283 coordinates L-serine. Glutamate 349–serine 352 is an ATP binding site. L-serine is bound at residue threonine 384.

Belongs to the class-II aminoacyl-tRNA synthetase family. Type-1 seryl-tRNA synthetase subfamily. In terms of assembly, homodimer. The tRNA molecule binds across the dimer.

The protein resides in the cytoplasm. It carries out the reaction tRNA(Ser) + L-serine + ATP = L-seryl-tRNA(Ser) + AMP + diphosphate + H(+). It catalyses the reaction tRNA(Sec) + L-serine + ATP = L-seryl-tRNA(Sec) + AMP + diphosphate + H(+). It participates in aminoacyl-tRNA biosynthesis; selenocysteinyl-tRNA(Sec) biosynthesis; L-seryl-tRNA(Sec) from L-serine and tRNA(Sec): step 1/1. In terms of biological role, catalyzes the attachment of serine to tRNA(Ser). Is also able to aminoacylate tRNA(Sec) with serine, to form the misacylated tRNA L-seryl-tRNA(Sec), which will be further converted into selenocysteinyl-tRNA(Sec). This chain is Serine--tRNA ligase, found in Treponema pallidum (strain Nichols).